The following is a 239-amino-acid chain: Fatty acid metabolism regulator protein (239 aa).

The 69-residue stretch at 6–74 (QSPAGFAEEY…HGKPTKINNF (69 aa)) folds into the HTH gntR-type domain. The segment at residues 34-53 (ERELSELIGVTRTTLREVLQ) is a DNA-binding region (H-T-H motif).

In terms of assembly, homodimer.

The protein localises to the cytoplasm. Multifunctional regulator of fatty acid metabolism. This Pectobacterium atrosepticum (strain SCRI 1043 / ATCC BAA-672) (Erwinia carotovora subsp. atroseptica) protein is Fatty acid metabolism regulator protein.